The sequence spans 561 residues: 3beta-hydroxysteroid-dehydrogenase/decarboxylase isoform 3 (561 aa).

Lys166 provides a ligand contact to NAD(+). Positions 379–561 (VADILLWRNE…SDASSKPMFM (183 aa)) constitute a Reticulon domain. Transmembrane regions (helical) follow at residues 392–412 (FVSF…GNTF), 420–440 (LFIF…IFGF), and 504–524 (SLAA…FIYE).

The protein belongs to the 3-beta-HSD family.

It is found in the endoplasmic reticulum membrane. It catalyses the reaction a 3beta-hydroxysteroid-4alpha-carboxylate + NADP(+) = a 3-oxosteroid + CO2 + NADPH. The enzyme catalyses a 3beta-hydroxysteroid-4alpha-carboxylate + NAD(+) = a 3-oxosteroid + CO2 + NADH. The protein operates within steroid biosynthesis; zymosterol biosynthesis; zymosterol from lanosterol: step 4/6. The protein is 3beta-hydroxysteroid-dehydrogenase/decarboxylase isoform 3 (3BETAHSD/D3) of Arabidopsis thaliana (Mouse-ear cress).